The following is a 345-amino-acid chain: Molybdate/tungstate import ATP-binding protein WtpC (345 aa).

The 230-residue stretch at 2 to 231 (LKVESISKDY…PKSEEVARFL (230 aa)) folds into the ABC transporter domain. 33–40 (GPSGSGKT) serves as a coordination point for ATP. The region spanning 280 to 345 (KTSARNVFKA…FKASAIHVFP (66 aa)) is the Mop domain.

This sequence belongs to the ABC transporter superfamily. Sulfate/tungstate importer (TC 3.A.1.6) family. In terms of assembly, the complex is composed of two ATP-binding proteins (WtpC), two transmembrane proteins (WtpB) and a solute-binding protein (WtpA).

Its subcellular location is the cell membrane. It carries out the reaction tungstate(in) + ATP + H2O = tungstate(out) + ADP + phosphate + H(+). Functionally, part of the ABC transporter complex WtpABC involved in molybdate/tungstate import. Responsible for energy coupling to the transport system. This chain is Molybdate/tungstate import ATP-binding protein WtpC (wtpC), found in Pyrococcus horikoshii (strain ATCC 700860 / DSM 12428 / JCM 9974 / NBRC 100139 / OT-3).